The following is a 254-amino-acid chain: GPI alpha-1,4-mannosyltransferase I, stabilizing subunit (254 aa).

The signal sequence occupies residues 1-22 (MAAGAVAWLLLWAAWLVGRLAA). Residues 23–226 (DFSDAPFSAG…PVGLTIHTSL (204 aa)) are Lumenal-facing. N211 carries an N-linked (GlcNAc...) asparagine glycan. A helical membrane pass occupies residues 227 to 247 (VCSVTLLITILCSTLILLAVF). Over 248 to 254 (KYGHFSL) the chain is Cytoplasmic.

The protein belongs to the PIGX family. In terms of assembly, part of the glycosylphosphatidylinositol-mannosyltransferase I complex that is composed of PIGM and PIGX. Interacts with PIGM; PIGX stabilizes PIGM.

It localises to the endoplasmic reticulum membrane. The protein operates within glycolipid biosynthesis; glycosylphosphatidylinositol-anchor biosynthesis. Functionally, stabilizing subunit of the glycosylphosphatidylinositol-mannosyltransferase I complex which catalyzes the transfer of the first mannose, via an alpha-1,4 bond from a dolichol-phosphate-mannose (Dol-P-Man) to the glucosaminyl acyl phosphatidylinositol (GlcN-(acyl)PI) intermediate to generate alpha-D-Man-(1-&gt;4)-alpha-D-GlcN-(1-&gt;6)-(1-radyl,2-acyl-sn-glycero-3-phospho)-2-acyl-inositol and participates in the sixth step of the glycosylphosphatidylinositol-anchor biosynthesis. Probably acts by stabilizing the mannosyltransferase PIGM. In Mus musculus (Mouse), this protein is GPI alpha-1,4-mannosyltransferase I, stabilizing subunit.